A 728-amino-acid polypeptide reads, in one-letter code: Methylmalonyl-CoA mutase large subunit (728 aa).

7 residues coordinate (R)-methylmalonyl-CoA: Tyr75, Met78, Arg82, Thr85, Arg87, Tyr89, and Ser114. Positions 117 and 139 each coordinate cob(II)alamin. Residues Thr195 and Gln197 each contribute to the (R)-methylmalonyl-CoA site. Residues Val206 and Arg207 each contribute to the cob(II)alamin site. 4 residues coordinate (R)-methylmalonyl-CoA: Arg207, His244, Arg283, and Ser285. 11 residues coordinate cob(II)alamin: Gly333, Glu370, Ala373, Gly609, His610, Asp611, Arg612, Ser655, Leu657, Gly686, and Thr709. The 132-residue stretch at 597–728 (RPRILLAKMG…VKKLRASLDA (132 aa)) folds into the B12-binding domain.

The protein belongs to the methylmalonyl-CoA mutase family. Heterodimer of an alpha and a beta chain. Requires adenosylcob(III)alamin as cofactor.

It catalyses the reaction (R)-methylmalonyl-CoA = succinyl-CoA. Catalyzes the reversible conversion of succinyl-CoA to (R)-methylmalonyl-CoA through a radical mechanism. Is involved in the fermentation of pyruvate to propanoate that occurs in Propionibacteria. This Propionibacterium freudenreichii subsp. shermanii protein is Methylmalonyl-CoA mutase large subunit (mutB).